Here is a 610-residue protein sequence, read N- to C-terminus: Autophagy-related protein 22-1 (610 aa).

The segment at 1-29 is disordered; it reads MIFTSTPPAPPPADAQQRQPRYPGEDTTP. The chain crosses the membrane as a helical span at residues 41-61; that stretch reads YGIAAEVFAVCGVGSFLPLTL. The N-linked (GlcNAc...) asparagine glycan is linked to Asn-90. The next 3 membrane-spanning stretches (helical) occupy residues 120–140, 153–173, and 177–197; these read SFAM…LISF, LLLT…FISP, and ILGA…FVVL. The disordered stretch occupies residues 216–242; the sequence is KTEGEELPHLDSSGEYTRSGSFNRGDN. Over residues 229–239 the composition is skewed to polar residues; the sequence is GEYTRSGSFNR. 4 helical membrane passes run 277–297, 310–330, 379–399, and 415–435; these read GVGL…LLLF, TLPL…FTVV, VVIF…VSGT, and VGLL…LWPV. A glycan (N-linked (GlcNAc...) asparagine) is linked at Asn-445. Helical transmembrane passes span 450-470, 485-507, 527-547, and 550-570; these read LCIA…IPLV, FPLG…SFFG, KGSS…TGQV, and GFFF…MVNA. The disordered stretch occupies residues 586–610; that stretch reads KSHGENSSEFGHPSEEAEGLLARNP. The N-linked (GlcNAc...) asparagine glycan is linked to Asn-591.

Belongs to the ATG22 family.

The protein resides in the vacuole membrane. Functionally, vacuolar effluxer which mediate the efflux of amino acids resulting from autophagic degradation. The release of autophagic amino acids allows the maintenance of protein synthesis and viability during nitrogen starvation. This is Autophagy-related protein 22-1 (atg22-1) from Aspergillus clavatus (strain ATCC 1007 / CBS 513.65 / DSM 816 / NCTC 3887 / NRRL 1 / QM 1276 / 107).